The chain runs to 200 residues: MFAELAPYLSNPRQTLAQILNFALVLSTAFMGWKALSVYTNSPSPIVVVLSGSMEPAFQRGDLLFLWNNSPRAEVGEIVVYNVQGKDIPIVHRVIKAFGAGDGGNKSQRRLEREADKPSGPGLSSPLSHQILTKGDNNIADDTELYAQGQDYLDRKLDIVGSVRGYIPAVGYVTIMLAENPWMKTVLLGIMGVMVMLQRE.

At 1–14 the chain is on the cytoplasmic side; it reads MFAELAPYLSNPRQ. A helical; Signal-anchor for type II membrane protein transmembrane segment spans residues 15–33; that stretch reads TLAQILNFALVLSTAFMGW. Topologically, residues 34-200 are lumenal; it reads KALSVYTNSP…MGVMVMLQRE (167 aa). Catalysis depends on charge relay system residues Ser53 and His92. Positions 101–129 are disordered; that stretch reads GDGGNKSQRRLEREADKPSGPGLSSPLSH. N-linked (GlcNAc...) asparagine glycosylation occurs at Asn105. Positions 118 to 128 are enriched in low complexity; the sequence is PSGPGLSSPLS. Asp142 (charge relay system) is an active-site residue. The segment at 186 to 197 is C-terminal short (CTS) helix; it reads VLLGIMGVMVML.

It belongs to the peptidase S26B family. As to quaternary structure, component of the signal peptidase complex (SPC) composed of a catalytic subunit SEC11 and three accessory subunits SPC1, SPC2 and SPC3. The complex induces a local thinning of the ER membrane which is used to measure the length of the signal peptide (SP) h-region of protein substrates. This ensures the selectivity of the complex towards h-regions shorter than 18-20 amino acids. SPC associates with the translocon complex.

Its subcellular location is the endoplasmic reticulum membrane. It catalyses the reaction Cleavage of hydrophobic, N-terminal signal or leader sequences from secreted and periplasmic proteins.. In terms of biological role, catalytic component of the signal peptidase complex (SPC) which catalyzes the cleavage of N-terminal signal sequences from nascent proteins as they are translocated into the lumen of the endoplasmic reticulum. Specifically cleaves N-terminal signal peptides that contain a hydrophobic alpha-helix (h-region) shorter than 18-20 amino acids. The protein is Signal peptidase complex catalytic subunit SEC11 (SEC11) of Arthroderma otae (strain ATCC MYA-4605 / CBS 113480) (Microsporum canis).